Here is a 500-residue protein sequence, read N- to C-terminus: Perfringolysin O (500 aa).

Residues 1 to 28 (MIRFKKTKLIASIAMALCLFSQPVISFS) form the signal peptide. 4 beta stranded membrane-spanning segments follow: residues 189–202 (KSQI…NAKV), 209–218 (VDFNAVANNE), 287–296 (SKDVQAAFKA), and 304–316 (KNSQ…YENS). Residues 458 to 468 (ECTGLAWEWWR) carry the Conserved undecapeptide motif. Positions 490–491 (TL) match the Cholesterol binding motif.

The protein belongs to the cholesterol-dependent cytolysin family. As to quaternary structure, modeling based on cryo-EM shows a homooligomeric pore complex containing 38-44 subunits; when inserted in the host membrane.

It is found in the secreted. It localises to the host cell membrane. In terms of biological role, a cholesterol-dependent toxin that causes cytolysis by forming pores in cholesterol-containing host membranes. After binding to target membranes, the protein assembles into a pre-pore complex. A major conformational change leads to insertion in the host membrane and formation of an oligomeric pore complex. Cholesterol is required for binding to host cell membranes, membrane insertion and pore formation; cholesterol binding is mediated by a Thr-Leu pair in the C-terminus. Can be reversibly inactivated by oxidation. In Clostridium perfringens (strain 13 / Type A), this protein is Perfringolysin O (pfo).